An 830-amino-acid polypeptide reads, in one-letter code: Leucine--tRNA ligase (830 aa).

Positions 48–58 match the 'HIGH' region motif; it reads PYPSGAIHMGH. Residues 596–600 carry the 'KMSKS' region motif; it reads KMSKS. Position 599 (lysine 599) interacts with ATP.

The protein belongs to the class-I aminoacyl-tRNA synthetase family.

The protein localises to the cytoplasm. The catalysed reaction is tRNA(Leu) + L-leucine + ATP = L-leucyl-tRNA(Leu) + AMP + diphosphate. This is Leucine--tRNA ligase from Helicobacter hepaticus (strain ATCC 51449 / 3B1).